The sequence spans 525 residues: GMP synthase [glutamine-hydrolyzing] (525 aa).

One can recognise a Glutamine amidotransferase type-1 domain in the interval Arg9–Leu207. Cys86 acts as the Nucleophile in catalysis. Catalysis depends on residues His181 and Glu183. Positions Trp208–Arg400 constitute a GMPS ATP-PPase domain. Ser235–Ser241 is an ATP binding site.

Homodimer.

The enzyme catalyses XMP + L-glutamine + ATP + H2O = GMP + L-glutamate + AMP + diphosphate + 2 H(+). Its pathway is purine metabolism; GMP biosynthesis; GMP from XMP (L-Gln route): step 1/1. In terms of biological role, catalyzes the synthesis of GMP from XMP. This is GMP synthase [glutamine-hydrolyzing] from Shigella boydii serotype 18 (strain CDC 3083-94 / BS512).